The primary structure comprises 207 residues: Small ribosomal subunit protein uS4 (207 aa).

A disordered region spans residues 33 to 54 (KLDSKPGQHGRTSGARTSDYGN). A compositionally biased stretch (polar residues) spans 42-53 (GRTSGARTSDYG). The 64-residue stretch at 97–160 (SRLDNVVYRM…KKQVRIAEAL (64 aa)) folds into the S4 RNA-binding domain.

This sequence belongs to the universal ribosomal protein uS4 family. In terms of assembly, part of the 30S ribosomal subunit. Contacts protein S5. The interaction surface between S4 and S5 is involved in control of translational fidelity.

One of the primary rRNA binding proteins, it binds directly to 16S rRNA where it nucleates assembly of the body of the 30S subunit. In terms of biological role, with S5 and S12 plays an important role in translational accuracy. In Cupriavidus necator (strain ATCC 17699 / DSM 428 / KCTC 22496 / NCIMB 10442 / H16 / Stanier 337) (Ralstonia eutropha), this protein is Small ribosomal subunit protein uS4.